The primary structure comprises 274 residues: Oxidoreductase stcQ (274 aa).

It belongs to the avfA family.

Its pathway is mycotoxin biosynthesis; sterigmatocystin biosynthesis. In terms of biological role, oxidoreductase; part of the gene cluster that mediates the biosynthesis of sterigmatocystin (ST), a polyketide-derived furanocoumarin which is part of the most toxic and carcinogenic compounds among the known mycotoxins. The first step in the biosynthesis of sterigmatocystin is the production of hexanoate by the fatty acid synthase (FAS) units stcJ and stcK. The polyketide backbone is assembled by the non-reducing polyketide synthase stcA by condensation of the starter hexanoyl-CoA and 7 malonyl-CoA extender units followed by cyclization and release of norsolorinic acid. Norsolorinic acid is the first stable intermediate in the biosynthesis of sterigmatocystin and is converted into averantin (AVN) by the ketoreductase stcE which reduces the hexanoate ketone to an alcohol. Averantin is then oxidized into 5'-hydroxyaverantin (HAVN) by the cytochrome P450 monooxygenase stcF. 5'-hydroxyaverantin is further converted to 5'-oxyaverantin (OAVN) by the 5'-hydroxyaverantin dehydrogenase stcG. The next step is the conversion of OAVN into averufin (AVF) which is catalyzed by a yet to be identified enzyme. The cytochrome P450 monooxygenase stcB and the flavin-binding monooxygenase stcW are both required for the conversion of averufin to 1-hydroxyversicolorone. The esterase stcI probably catalyzes the formation of versiconal hemiacetal acetate from 1-hydroxyversicolorone. The oxydoreductase stcN then probably catalyzes the biosynthetic step from versiconal to versicolorin B (VERB). The next step is performed by the versicolorin B desaturase stcL to produce versicolorin A (VERA). The ketoreductase stcU and the cytochrome P450 monooxygenase stcS are involved in the conversion of versicolorin A to demethylsterigmatocystin. The Baeyer-Villiger oxidas stcQ and the reductase stcR might be involved in the biosynthetic step from versicolorin A to demethylsterigmatocystin. The final step in the biosynthesis of sterigmatocystin is the methylation of demethylsterigmatocystin catalyzed by the methyltransferase stcP. This chain is Oxidoreductase stcQ, found in Emericella nidulans (strain FGSC A4 / ATCC 38163 / CBS 112.46 / NRRL 194 / M139) (Aspergillus nidulans).